The chain runs to 261 residues: Sulfur carrier protein FdhD (261 aa).

The active-site Cysteine persulfide intermediate is the Cys105. 245–250 (FIRGDR) is a Mo-bis(molybdopterin guanine dinucleotide) binding site.

Belongs to the FdhD family.

It localises to the cytoplasm. Its function is as follows. Required for formate dehydrogenase (FDH) activity. Acts as a sulfur carrier protein that transfers sulfur from IscS to the molybdenum cofactor prior to its insertion into FDH. The protein is Sulfur carrier protein FdhD of Listeria monocytogenes serovar 1/2a (strain ATCC BAA-679 / EGD-e).